Reading from the N-terminus, the 448-residue chain is UDP-N-acetylmuramoylalanine--D-glutamate ligase (448 aa).

G112–T118 serves as a coordination point for ATP.

It belongs to the MurCDEF family.

Its subcellular location is the cytoplasm. It catalyses the reaction UDP-N-acetyl-alpha-D-muramoyl-L-alanine + D-glutamate + ATP = UDP-N-acetyl-alpha-D-muramoyl-L-alanyl-D-glutamate + ADP + phosphate + H(+). It functions in the pathway cell wall biogenesis; peptidoglycan biosynthesis. Functionally, cell wall formation. Catalyzes the addition of glutamate to the nucleotide precursor UDP-N-acetylmuramoyl-L-alanine (UMA). The chain is UDP-N-acetylmuramoylalanine--D-glutamate ligase from Acinetobacter baumannii (strain ATCC 17978 / DSM 105126 / CIP 53.77 / LMG 1025 / NCDC KC755 / 5377).